The following is a 137-amino-acid chain: MAGEAASPPLKVLAAQLRAAGRGAGGTWRLSRTETGRAPLCLRAVWMQGTVLQVERGGGGSARLRDGSGHFTVLGVEDVPRGRPCLSAGKYVMVMGMVRACSPEPVLRAIKMTDLSENPVHEEMWGLEVEELHRVIP.

Residues 45–115 (VWMQGTVLQV…VLRAIKMTDL (71 aa)) constitute a DNA-binding region (OB).

The protein belongs to the RMI2 family. Component of the RMI complex, containing at least TOP3A, RMI1 and RMI2. The RMI complex interacts with BLM.

Its subcellular location is the nucleus. Functionally, essential component of the RMI complex, a complex that plays an important role in the processing of homologous recombination intermediates. It is required to regulate sister chromatid segregation and to limit DNA crossover. Essential for the stability, localization, and function of BLM, TOP3A, and complexes containing BLM. In the RMI complex, it is required to target BLM to chromatin and stress-induced nuclear foci and mitotic phosphorylation of BLM. This is RecQ-mediated genome instability protein 2 (RMI2) from Gallus gallus (Chicken).